A 528-amino-acid polypeptide reads, in one-letter code: uncharacterized protein (528 aa).

Residues 1–51 are disordered; the sequence is MEHPKRPTPKNEALHIDASGRGESSFSVHRSHSGGHEPFAPSPGSSIGASV. Repeat copies occupy residues 185–213 and 285–313. Residues 185 to 313 are 2 X 29 AA repeats; it reads EQEEEYISNS…EEKRKLQQAL (129 aa). Disordered regions lie at residues 467-497 and 509-528; these read RAHG…NNDT and TVHP…DSHY. Polar residues predominate over residues 472–496; the sequence is SPPTVVVQPSTSRAGSNSTANINND.

This is an uncharacterized protein from Caenorhabditis elegans.